We begin with the raw amino-acid sequence, 332 residues long: Holliday junction branch migration complex subunit RuvB (332 aa).

Residues 1-181 are large ATPase domain (RuvB-L); it reads MTRFLDSDAM…FGITGHMEYY (181 aa). ATP contacts are provided by residues Leu-20, Arg-21, Gly-62, Lys-65, Thr-66, Thr-67, 128–130, Arg-171, Tyr-181, and Arg-218; that span reads EDF. Residue Thr-66 participates in Mg(2+) binding. The tract at residues 182–252 is small ATPAse domain (RuvB-S); it reads EENDLTEIIE…ITDKALTMLD (71 aa). Residues 255-332 form a head domain (RuvB-H) region; the sequence is HEGLDYVDQK…EHLGYQRFDK (78 aa). Residues Arg-291, Arg-310, Arg-312, and Arg-315 each coordinate DNA.

This sequence belongs to the RuvB family. As to quaternary structure, homohexamer. Forms an RuvA(8)-RuvB(12)-Holliday junction (HJ) complex. HJ DNA is sandwiched between 2 RuvA tetramers; dsDNA enters through RuvA and exits via RuvB. An RuvB hexamer assembles on each DNA strand where it exits the tetramer. Each RuvB hexamer is contacted by two RuvA subunits (via domain III) on 2 adjacent RuvB subunits; this complex drives branch migration. In the full resolvosome a probable DNA-RuvA(4)-RuvB(12)-RuvC(2) complex forms which resolves the HJ.

The protein localises to the cytoplasm. It catalyses the reaction ATP + H2O = ADP + phosphate + H(+). The RuvA-RuvB-RuvC complex processes Holliday junction (HJ) DNA during genetic recombination and DNA repair, while the RuvA-RuvB complex plays an important role in the rescue of blocked DNA replication forks via replication fork reversal (RFR). RuvA specifically binds to HJ cruciform DNA, conferring on it an open structure. The RuvB hexamer acts as an ATP-dependent pump, pulling dsDNA into and through the RuvAB complex. RuvB forms 2 homohexamers on either side of HJ DNA bound by 1 or 2 RuvA tetramers; 4 subunits per hexamer contact DNA at a time. Coordinated motions by a converter formed by DNA-disengaged RuvB subunits stimulates ATP hydrolysis and nucleotide exchange. Immobilization of the converter enables RuvB to convert the ATP-contained energy into a lever motion, pulling 2 nucleotides of DNA out of the RuvA tetramer per ATP hydrolyzed, thus driving DNA branch migration. The RuvB motors rotate together with the DNA substrate, which together with the progressing nucleotide cycle form the mechanistic basis for DNA recombination by continuous HJ branch migration. Branch migration allows RuvC to scan DNA until it finds its consensus sequence, where it cleaves and resolves cruciform DNA. This Streptococcus agalactiae serotype Ia (strain ATCC 27591 / A909 / CDC SS700) protein is Holliday junction branch migration complex subunit RuvB.